The sequence spans 138 residues: Large ribosomal subunit protein uL16 (138 aa).

Residues 1–16 (MLIPRRVKHRKQHHPS) are compositionally biased toward basic residues. Residues 1-25 (MLIPRRVKHRKQHHPSRSGAAKGGT) are disordered.

This sequence belongs to the universal ribosomal protein uL16 family. As to quaternary structure, part of the 50S ribosomal subunit.

Binds 23S rRNA and is also seen to make contacts with the A and possibly P site tRNAs. This Rhodococcus erythropolis (strain PR4 / NBRC 100887) protein is Large ribosomal subunit protein uL16.